Here is a 278-residue protein sequence, read N- to C-terminus: Sulfur carrier protein FdhD (278 aa).

Catalysis depends on Cys-121, which acts as the Cysteine persulfide intermediate. 260–265 contacts Mo-bis(molybdopterin guanine dinucleotide); sequence FCKPGR.

This sequence belongs to the FdhD family.

The protein localises to the cytoplasm. Required for formate dehydrogenase (FDH) activity. Acts as a sulfur carrier protein that transfers sulfur from IscS to the molybdenum cofactor prior to its insertion into FDH. The protein is Sulfur carrier protein FdhD of Salmonella paratyphi A (strain ATCC 9150 / SARB42).